Here is a 178-residue protein sequence, read N- to C-terminus: Ribulose bisphosphate carboxylase small subunit, chloroplastic (178 aa).

The N-terminal 54 residues, Met1 to Asn54, are a transit peptide targeting the chloroplast.

This sequence belongs to the RuBisCO small chain family. In terms of assembly, heterohexadecamer of 8 large and 8 small subunits.

The protein resides in the plastid. The protein localises to the chloroplast. Functionally, ruBisCO catalyzes two reactions: the carboxylation of D-ribulose 1,5-bisphosphate, the primary event in carbon dioxide fixation, as well as the oxidative fragmentation of the pentose substrate. Both reactions occur simultaneously and in competition at the same active site. Although the small subunit is not catalytic it is essential for maximal activity. The chain is Ribulose bisphosphate carboxylase small subunit, chloroplastic from Trifolium repens (Creeping white clover).